Here is a 685-residue protein sequence, read N- to C-terminus: Methionine--tRNA ligase (685 aa).

The short motif at 15 to 25 is the 'HIGH' region element; sequence PYANGPIHLGH. Residues C146, C149, C159, and C162 each contribute to the Zn(2+) site. The 'KMSKS' region motif lies at 331–335; the sequence is KMSKS. K334 contacts ATP. Positions 583-685 constitute a tRNA-binding domain; sequence DFAKMDLRVA…AGVKAGSRVK (103 aa).

It belongs to the class-I aminoacyl-tRNA synthetase family. MetG type 1 subfamily. Homodimer. Zn(2+) is required as a cofactor.

It localises to the cytoplasm. The catalysed reaction is tRNA(Met) + L-methionine + ATP = L-methionyl-tRNA(Met) + AMP + diphosphate. Is required not only for elongation of protein synthesis but also for the initiation of all mRNA translation through initiator tRNA(fMet) aminoacylation. This is Methionine--tRNA ligase from Actinobacillus succinogenes (strain ATCC 55618 / DSM 22257 / CCUG 43843 / 130Z).